The chain runs to 819 residues: Leucine--tRNA ligase (819 aa).

Positions 42–53 match the 'HIGH' region motif; that stretch reads PYPSGAKLHIGH. The 'KMSKS' region signature appears at 578-582; sequence RMSKS. An ATP-binding site is contributed by lysine 581.

This sequence belongs to the class-I aminoacyl-tRNA synthetase family.

The protein localises to the cytoplasm. It catalyses the reaction tRNA(Leu) + L-leucine + ATP = L-leucyl-tRNA(Leu) + AMP + diphosphate. The sequence is that of Leucine--tRNA ligase from Caldanaerobacter subterraneus subsp. tengcongensis (strain DSM 15242 / JCM 11007 / NBRC 100824 / MB4) (Thermoanaerobacter tengcongensis).